Here is a 564-residue protein sequence, read N- to C-terminus: Arginine--tRNA ligase (564 aa).

Positions 136-146 match the 'HIGH' region motif; that stretch reads ANPTGPLHMGN.

This sequence belongs to the class-I aminoacyl-tRNA synthetase family. Monomer.

Its subcellular location is the cytoplasm. It catalyses the reaction tRNA(Arg) + L-arginine + ATP = L-arginyl-tRNA(Arg) + AMP + diphosphate. This Ruminiclostridium cellulolyticum (strain ATCC 35319 / DSM 5812 / JCM 6584 / H10) (Clostridium cellulolyticum) protein is Arginine--tRNA ligase.